We begin with the raw amino-acid sequence, 248 residues long: Cutinase cut1 (248 aa).

The N-terminal stretch at 1–17 (MRSLSLFTALLAGQAFA) is a signal peptide. Cysteine 79 and cysteine 153 are joined by a disulfide. The active-site Nucleophile is serine 164. The cysteines at positions 212 and 219 are disulfide-linked. Aspartate 216 is a catalytic residue. Histidine 229 acts as the Proton donor/acceptor in catalysis.

Belongs to the cutinase family. In terms of processing, the 2 disulfide bonds play a critical role in holding the catalytic residues in juxta-position; reduction of the disulfide bridges results in the complete inactivation of the enzyme.

Its subcellular location is the secreted. It carries out the reaction cutin + H2O = cutin monomers.. Functionally, catalyzes the hydrolysis of complex carboxylic polyesters found in the cell wall of plants. May degrade cutin, a macromolecule that forms the structure of the plant cuticle. May also degrade suberin, a specialized macromolecule found in the cell wall of various plant tissues. This chain is Cutinase cut1, found in Trichoderma harzianum (Hypocrea lixii).